Consider the following 252-residue polypeptide: Small ribosomal subunit protein uS2B (252 aa).

Ser-2 bears the N-acetylserine mark. Composition is skewed to acidic residues over residues 213–229 (VAEEAAAAEEGEEEEVK) and 241–252 (EWAEENADNVEW). The interval 213 to 252 (VAEEAAAAEEGEEEEVKEEVTEGQAEATEWAEENADNVEW) is disordered.

The protein belongs to the universal ribosomal protein uS2 family. As to quaternary structure, component of the small ribosomal subunit. Mature ribosomes consist of a small (40S) and a large (60S) subunit. The 40S subunit contains about 33 different proteins and 1 molecule of RNA (18S). The 60S subunit contains about 49 different proteins and 3 molecules of RNA (25S, 5.8S and 5S). Interacts with RPS21.

The protein localises to the cytoplasm. Its function is as follows. Required for the assembly and/or stability of the 40S ribosomal subunit. Required for the processing of the 20S rRNA-precursor to mature 18S rRNA in a late step of the maturation of 40S ribosomal subunits. This chain is Small ribosomal subunit protein uS2B, found in Saccharomyces cerevisiae (strain RM11-1a) (Baker's yeast).